The following is a 273-amino-acid chain: 4-hydroxy-tetrahydrodipicolinate reductase (273 aa).

Residues 12–17 (GAGGRM) and Glu-38 each bind NAD(+). Arg-39 serves as a coordination point for NADP(+). NAD(+) is bound by residues 102-104 (GTT) and 126-129 (AANF). Catalysis depends on His-159, which acts as the Proton donor/acceptor. His-160 serves as a coordination point for (S)-2,3,4,5-tetrahydrodipicolinate. Residue Lys-163 is the Proton donor of the active site. Residue 169 to 170 (GT) coordinates (S)-2,3,4,5-tetrahydrodipicolinate.

It belongs to the DapB family. As to quaternary structure, homotetramer.

It localises to the cytoplasm. The catalysed reaction is (S)-2,3,4,5-tetrahydrodipicolinate + NAD(+) + H2O = (2S,4S)-4-hydroxy-2,3,4,5-tetrahydrodipicolinate + NADH + H(+). It carries out the reaction (S)-2,3,4,5-tetrahydrodipicolinate + NADP(+) + H2O = (2S,4S)-4-hydroxy-2,3,4,5-tetrahydrodipicolinate + NADPH + H(+). It participates in amino-acid biosynthesis; L-lysine biosynthesis via DAP pathway; (S)-tetrahydrodipicolinate from L-aspartate: step 4/4. In terms of biological role, catalyzes the conversion of 4-hydroxy-tetrahydrodipicolinate (HTPA) to tetrahydrodipicolinate. The protein is 4-hydroxy-tetrahydrodipicolinate reductase of Yersinia enterocolitica serotype O:8 / biotype 1B (strain NCTC 13174 / 8081).